Consider the following 149-residue polypeptide: Protein-export protein SecB (149 aa).

The protein belongs to the SecB family. Homotetramer, a dimer of dimers. One homotetramer interacts with 1 SecA dimer.

Its subcellular location is the cytoplasm. One of the proteins required for the normal export of preproteins out of the cell cytoplasm. It is a molecular chaperone that binds to a subset of precursor proteins, maintaining them in a translocation-competent state. It also specifically binds to its receptor SecA. In Hydrogenovibrio crunogenus (strain DSM 25203 / XCL-2) (Thiomicrospira crunogena), this protein is Protein-export protein SecB.